Consider the following 74-residue polypeptide: UPF0435 protein Bcer98_0391 (74 aa).

This sequence belongs to the UPF0435 family.

In Bacillus cytotoxicus (strain DSM 22905 / CIP 110041 / 391-98 / NVH 391-98), this protein is UPF0435 protein Bcer98_0391.